The following is a 348-amino-acid chain: Cyclic AMP-dependent transcription factor ATF-4 (348 aa).

Residue Lys53 forms a Glycyl lysine isopeptide (Lys-Gly) (interchain with G-Cter in SUMO2) linkage. Disordered regions lie at residues 151–174 (QGAP…TPDH) and 187–265 (PEGD…GEKM). 5 positions are modified to phosphoserine: Ser211, Ser215, Ser220, Ser227, and Ser231. Residues 211-220 (SDNDSGICMS) carry the BetaTrCP degron motif motif. Over residues 221-241 (PDSSLGSPQDSPSTSRGSPNK) the composition is skewed to polar residues. Pro232 carries the post-translational modification 4-hydroxyproline. Ser242 and Ser245 each carry phosphoserine. Residues 242 to 253 (SLLSPGALSGSS) are compositionally biased toward low complexity. Residues Lys256, Lys264, and Lys269 each participate in a glycyl lysine isopeptide (Lys-Gly) (interchain with G-Cter in SUMO2) cross-link. One can recognise a bZIP domain in the interval 275 to 338 (LDKKLKKMEQ…QYLKDQIEEV (64 aa)). Positions 277–297 (KKLKKMEQNKTAATRYRQKKR) are basic motif. Residues 302 to 338 (ALTGECKELEKKNEALKEKADSLAKEIQYLKDQIEEV) form an interaction with GABBR1 region. The leucine-zipper stretch occupies residues 303-331 (LTGECKELEKKNEALKEKADSLAKEIQYL). N6-acetyllysine is present on Lys308.

Belongs to the bZIP family. Binds DNA as a homodimer and as a heterodimer. Heterodimer; heterodimerizes with CEBPB. Heterodimer; heterodimerizes with DDIT3/CHOP. Interacts with CEP290 (via an N-terminal region). Interacts with NEK6, DAPK2 (isoform 2) and ZIPK/DAPK3. Interacts (via its leucine zipper domain) with GABBR1 and GABBR2 (via their C-termini). Forms a heterodimer with TXLNG in osteoblasts. Interacts (via its DNA binding domain) with FOXO1 (C-terminal half); the interaction occurs in osteoblasts and regulates glucose homeostasis through suppression of beta-cell proliferation and a decrease in insulin production. Interacts with SATB2; the interaction results in enhanced DNA binding and transactivation by these transcription factors. Interacts with ABRAXAS2. Interacts with TRIB3, inhibiting the transactivation activity of ATF4. Interacts with DISC1; which inhibits ATF4 transcription factor activity by disrupting ATF4 dimerization and DNA-binding. Interacts with EP300/p300; EP300/p300 stabilizes ATF4 and increases its transcriptional activity independently of its catalytic activity by preventing its ubiquitination. In terms of processing, ubiquitinated by SCF(BTRC) in response to mTORC1 signal, followed by proteasomal degradation and leading to down-regulate expression of SIRT4. Interaction with EP300/p300 inhibits ubiquitination by SCF(BTRC). Phosphorylation at Ser-242 by RPS6KA3/RSK2 in osteoblasts enhances transactivation activity and promotes osteoblast differentiation. Phosphorylated on the betaTrCP degron motif at Ser-215, followed by phosphorylation at Ser-220, Ser-227, Ser-231 and Ser-245, promoting interaction with BTRC and ubiquitination. Phosphorylation is promoted by mTORC1. Phosphorylation at Ser-211 by CK2 decreases its stability. Phosphorylated by NEK6. Post-translationally, hydroxylated by PHD3, leading to decreased protein stability.

The protein resides in the nucleus. The protein localises to the nucleus speckle. Its subcellular location is the cytoplasm. It localises to the cell membrane. It is found in the cytoskeleton. The protein resides in the microtubule organizing center. The protein localises to the centrosome. Its function is as follows. Transcription factor that binds the cAMP response element (CRE) (consensus: 5'-GTGACGT[AC][AG]-3') and displays two biological functions, as regulator of metabolic and redox processes under normal cellular conditions, and as master transcription factor during integrated stress response (ISR). Binds to asymmetric CRE's as a heterodimer and to palindromic CRE's as a homodimer. Core effector of the ISR, which is required for adaptation to various stress such as endoplasmic reticulum (ER) stress, amino acid starvation, mitochondrial stress or oxidative stress. During ISR, ATF4 translation is induced via an alternative ribosome translation re-initiation mechanism in response to EIF2S1/eIF-2-alpha phosphorylation, and stress-induced ATF4 acts as a master transcription factor of stress-responsive genes in order to promote cell recovery. Promotes the transcription of genes linked to amino acid sufficiency and resistance to oxidative stress to protect cells against metabolic consequences of ER oxidation. Activates the transcription of NLRP1, possibly in concert with other factors in response to ER stress. Activates the transcription of asparagine synthetase (ASNS) in response to amino acid deprivation or ER stress. However, when associated with DDIT3/CHOP, the transcriptional activation of the ASNS gene is inhibited in response to amino acid deprivation. Together with DDIT3/CHOP, mediates programmed cell death by promoting the expression of genes involved in cellular amino acid metabolic processes, mRNA translation and the terminal unfolded protein response (terminal UPR), a cellular response that elicits programmed cell death when ER stress is prolonged and unresolved. Activates the expression of COX7A2L/SCAF1 downstream of the EIF2AK3/PERK-mediated unfolded protein response, thereby promoting formation of respiratory chain supercomplexes and increasing mitochondrial oxidative phosphorylation. Together with DDIT3/CHOP, activates the transcription of the IRS-regulator TRIB3 and promotes ER stress-induced neuronal cell death by regulating the expression of BBC3/PUMA in response to ER stress. May cooperate with the UPR transcriptional regulator QRICH1 to regulate ER protein homeostasis which is critical for cell viability in response to ER stress. In the absence of stress, ATF4 translation is at low levels and it is required for normal metabolic processes such as embryonic lens formation, fetal liver hematopoiesis, bone development and synaptic plasticity. Acts as a regulator of osteoblast differentiation in response to phosphorylation by RPS6KA3/RSK2: phosphorylation in osteoblasts enhances transactivation activity and promotes expression of osteoblast-specific genes and post-transcriptionally regulates the synthesis of Type I collagen, the main constituent of the bone matrix. Cooperates with FOXO1 in osteoblasts to regulate glucose homeostasis through suppression of beta-cell production and decrease in insulin production. Activates transcription of SIRT4. Regulates the circadian expression of the core clock component PER2 and the serotonin transporter SLC6A4. Binds in a circadian time-dependent manner to the cAMP response elements (CRE) in the SLC6A4 and PER2 promoters and periodically activates the transcription of these genes. Mainly acts as a transcriptional activator in cellular stress adaptation, but it can also act as a transcriptional repressor: acts as a regulator of synaptic plasticity by repressing transcription, thereby inhibiting induction and maintenance of long-term memory. Regulates synaptic functions via interaction with DISC1 in neurons, which inhibits ATF4 transcription factor activity by disrupting ATF4 dimerization and DNA-binding. The sequence is that of Cyclic AMP-dependent transcription factor ATF-4 from Bos taurus (Bovine).